The chain runs to 333 residues: GTP 3',8-cyclase (333 aa).

One can recognise a Radical SAM core domain in the interval 7–221 (KFGRVHDYIR…FEACDAIGFE (215 aa)). A GTP-binding site is contributed by arginine 16. [4Fe-4S] cluster is bound by residues cysteine 23 and cysteine 27. Tyrosine 29 contacts S-adenosyl-L-methionine. Position 30 (cysteine 30) interacts with [4Fe-4S] cluster. Arginine 66 is a binding site for GTP. Glycine 70 provides a ligand contact to S-adenosyl-L-methionine. A GTP-binding site is contributed by threonine 97. Serine 121 serves as a coordination point for S-adenosyl-L-methionine. Lysine 158 lines the GTP pocket. Residue methionine 192 coordinates S-adenosyl-L-methionine. 2 residues coordinate [4Fe-4S] cluster: cysteine 257 and cysteine 260. A GTP-binding site is contributed by 262–264 (RLR). Position 274 (cysteine 274) interacts with [4Fe-4S] cluster.

Belongs to the radical SAM superfamily. MoaA family. In terms of assembly, monomer and homodimer. [4Fe-4S] cluster is required as a cofactor.

It catalyses the reaction GTP + AH2 + S-adenosyl-L-methionine = (8S)-3',8-cyclo-7,8-dihydroguanosine 5'-triphosphate + 5'-deoxyadenosine + L-methionine + A + H(+). Its pathway is cofactor biosynthesis; molybdopterin biosynthesis. Catalyzes the cyclization of GTP to (8S)-3',8-cyclo-7,8-dihydroguanosine 5'-triphosphate. The chain is GTP 3',8-cyclase from Listeria welshimeri serovar 6b (strain ATCC 35897 / DSM 20650 / CCUG 15529 / CIP 8149 / NCTC 11857 / SLCC 5334 / V8).